Here is a 317-residue protein sequence, read N- to C-terminus: 1D-myo-inositol 2-acetamido-2-deoxy-alpha-D-glucopyranoside deacetylase (317 aa).

The Zn(2+) site is built by His-15, Asp-18, and His-154. Residues 289 to 317 (QDLDNRNPNSQPPADQAREDHLLTGLGFA) form a disordered region.

This sequence belongs to the MshB deacetylase family. It depends on Zn(2+) as a cofactor.

It carries out the reaction 1D-myo-inositol 2-acetamido-2-deoxy-alpha-D-glucopyranoside + H2O = 1D-myo-inositol 2-amino-2-deoxy-alpha-D-glucopyranoside + acetate. Its function is as follows. Catalyzes the deacetylation of 1D-myo-inositol 2-acetamido-2-deoxy-alpha-D-glucopyranoside (GlcNAc-Ins) in the mycothiol biosynthesis pathway. This chain is 1D-myo-inositol 2-acetamido-2-deoxy-alpha-D-glucopyranoside deacetylase, found in Segniliparus rotundus (strain ATCC BAA-972 / CDC 1076 / CIP 108378 / DSM 44985 / JCM 13578).